Reading from the N-terminus, the 546-residue chain is NAD(P)H-quinone oxidoreductase chain 4 (546 aa).

The next 14 membrane-spanning stretches (helical) occupy residues 17–37 (VPWLSLSILVPIVGALLVPFI), 48–68 (WYALGVTLITFLITVSAYLNG), 103–123 (LILLTSFITSLACLAAWPVSF), 127–147 (LFYFLLLAMDGGQIAVFAVQD), 149–169 (LLFFLAWELELIPVYLLLAIW), 181–201 (FILYTAGSSLFILLAALAMGF), 222–242 (GFQLLCYAGLLIAFGVKLPIV), 256–276 (TAPVHMLLAGILLKMGGYALL), 290–310 (FAPLLIVLGVVNIIYAALTSF), 327–347 (MGFVLIGVGSFSALGTSGAML), 348–368 (QMISHGLIGASLFFLVGATYD), 389–409 (FALWTVCALASLALPGMSGFV), 430–450 (VVICCLAAVGVILTPIYLLSM), and 477–497 (VYIIGCLLVPIIGIGLYPRLM).

It belongs to the complex I subunit 4 family.

It localises to the cellular thylakoid membrane. The catalysed reaction is a plastoquinone + NADH + (n+1) H(+)(in) = a plastoquinol + NAD(+) + n H(+)(out). It catalyses the reaction a plastoquinone + NADPH + (n+1) H(+)(in) = a plastoquinol + NADP(+) + n H(+)(out). Its function is as follows. NDH-1 shuttles electrons from NAD(P)H, via FMN and iron-sulfur (Fe-S) centers, to quinones in the respiratory chain. The immediate electron acceptor for the enzyme in this species is believed to be plastoquinone. Couples the redox reaction to proton translocation (for every two electrons transferred, four hydrogen ions are translocated across the cytoplasmic membrane), and thus conserves the redox energy in a proton gradient. This Parasynechococcus marenigrum (strain WH8102) protein is NAD(P)H-quinone oxidoreductase chain 4.